Consider the following 165-residue polypeptide: MSDRRLEAVGLGELKVADRPDQVLVCYGLGSCVGLALYDPVVRIGAMVHVVLPDSSMGRGREAPPGKYADTGVEAAVAALVDAGASRSRLIAKAAGGARMLRLAGSNPQLDIGARNTEAVRAALARHQIRLVAEDMGGTYGRTLQLFIETGRVLVSTVGRGEHEL.

It belongs to the CheD family.

It carries out the reaction L-glutaminyl-[protein] + H2O = L-glutamyl-[protein] + NH4(+). Functionally, probably deamidates glutamine residues to glutamate on methyl-accepting chemotaxis receptors (MCPs), playing an important role in chemotaxis. The chain is Probable chemoreceptor glutamine deamidase CheD from Symbiobacterium thermophilum (strain DSM 24528 / JCM 14929 / IAM 14863 / T).